The following is a 608-amino-acid chain: MFDIKKELQKVPHKPGVYIMHDKNDEIIYVGKAIDLRRRVGQYFDSSKKLAKVAAMVSHVEYFEYIIVNNECEALVLESNLIKKNSPKYNIVLRDDKQYPYIKITNEKFPRVLKTRRVLKDKAKYFGPFPNAYAVNDIIDLIHETYKIRTCNLNFDKGQKLKRPCLNYYINRCDGMCVYDVNEEDYNKELLEVENFLNGREDELTKKLTDKMMAASKNLNFELAAKLRDSITNIQVILEKQNITNTKGLDLDMISMAREAETVCVQVFFMRNGKIIERQHFIIDNKYEESNEHIVGEFFKQFYIDLTYVPKQILTDIEIEDRDLIEEMLTEKKGSKVEIKIPKRGNKTDLLEMVRVNAKEGLDKYISRHLKRERNRENAILDLQDITGVKPIDRIECYDISNTSGVDSVGSMIVFKNGAKSSKDYRKFKIKTVEGADDYASHREVLTRRFRRLLDSDKKDNSFDEMPSIILMDGGKGQVNIAKEVLNEFNLDIPILGLVKDDKHRTRGIIYENEEIRLKVNTPLYRLLFAIQEETHRFAINYHRKLHEKNFKKSELDNIALIGEKRKKALMKHFKTLDRIKKASVEELCEVDGMNEKAAENIVNYFKQ.

The GIY-YIG domain occupies 13 to 91; it reads HKPGVYIMHD…IKKNSPKYNI (79 aa). The UVR domain maps to 202-237; sequence DELTKKLTDKMMAASKNLNFELAAKLRDSITNIQVI.

It belongs to the UvrC family. Interacts with UvrB in an incision complex.

The protein localises to the cytoplasm. Its function is as follows. The UvrABC repair system catalyzes the recognition and processing of DNA lesions. UvrC both incises the 5' and 3' sides of the lesion. The N-terminal half is responsible for the 3' incision and the C-terminal half is responsible for the 5' incision. The protein is UvrABC system protein C of Finegoldia magna (strain ATCC 29328 / DSM 20472 / WAL 2508) (Peptostreptococcus magnus).